A 692-amino-acid polypeptide reads, in one-letter code: Methionine--tRNA ligase (692 aa).

The short motif at 12–22 (PYANGSFHIGH) is the 'HIGH' region element. Positions 143, 146, 156, and 159 each coordinate Zn(2+). The 'KMSKS' region motif lies at 341–345 (KMSKS). Residue Lys-344 participates in ATP binding. The tRNA-binding domain occupies 586-692 (DFAKIDLRIA…PGAQPGMRVR (107 aa)).

Belongs to the class-I aminoacyl-tRNA synthetase family. MetG type 1 subfamily. Homodimer. Zn(2+) serves as cofactor.

Its subcellular location is the cytoplasm. The catalysed reaction is tRNA(Met) + L-methionine + ATP = L-methionyl-tRNA(Met) + AMP + diphosphate. Is required not only for elongation of protein synthesis but also for the initiation of all mRNA translation through initiator tRNA(fMet) aminoacylation. In Bordetella pertussis (strain Tohama I / ATCC BAA-589 / NCTC 13251), this protein is Methionine--tRNA ligase.